The primary structure comprises 155 residues: 3-dehydroquinate dehydratase (155 aa).

The active-site Proton acceptor is Tyr22. 3 residues coordinate substrate: Asn73, His79, and Asp86. The Proton donor role is filled by His99. Residues 100 to 101 (IS) and Arg110 contribute to the substrate site.

The protein belongs to the type-II 3-dehydroquinase family. In terms of assembly, homododecamer.

The enzyme catalyses 3-dehydroquinate = 3-dehydroshikimate + H2O. Its pathway is metabolic intermediate biosynthesis; chorismate biosynthesis; chorismate from D-erythrose 4-phosphate and phosphoenolpyruvate: step 3/7. In terms of biological role, catalyzes a trans-dehydration via an enolate intermediate. This is 3-dehydroquinate dehydratase from Campylobacter hominis (strain ATCC BAA-381 / DSM 21671 / CCUG 45161 / LMG 19568 / NCTC 13146 / CH001A).